Here is a 452-residue protein sequence, read N- to C-terminus: Na(+)/H(+) antiporter NhaA (452 aa).

A run of 11 helical transmembrane segments spans residues 27–47 (FLHIEAMSGVVLLLAAATALI), 78–98 (LHFWVNDVLMTIFFLVAGMEI), 114–134 (ILPIVAAIGGVCIPAIIYLSF), 141–161 (IYGWAVPTATDIAFALGILAL), 172–192 (IILLSLAIIDDIMAVLIIAFF), 201–221 (GLAIAAAGIALVFFFQWISFA), 222–242 (SAWLYVLPGAIIWWGLMVTGI), 316–336 (PWVAYGVMPIFAFANAGVSFA), 346–366 (FLIVLGIIIGLCIGKPLGILA), 388–408 (ILLIGFLAGIGFTMSIFVSML), and 421–441 (IGVLCGSGLSALAGLGYGLIY).

Belongs to the NhaA Na(+)/H(+) (TC 2.A.33) antiporter family.

Its subcellular location is the cell inner membrane. It catalyses the reaction Na(+)(in) + 2 H(+)(out) = Na(+)(out) + 2 H(+)(in). Na(+)/H(+) antiporter that extrudes sodium in exchange for external protons. This chain is Na(+)/H(+) antiporter NhaA, found in Bartonella bacilliformis (strain ATCC 35685 / KC583 / Herrer 020/F12,63).